We begin with the raw amino-acid sequence, 355 residues long: Uroporphyrinogen decarboxylase (355 aa).

Residues 36-40 (RQAGR), Asp85, Tyr160, Ser215, and His334 contribute to the substrate site.

This sequence belongs to the uroporphyrinogen decarboxylase family. As to quaternary structure, homodimer.

It localises to the cytoplasm. It catalyses the reaction uroporphyrinogen III + 4 H(+) = coproporphyrinogen III + 4 CO2. It participates in porphyrin-containing compound metabolism; protoporphyrin-IX biosynthesis; coproporphyrinogen-III from 5-aminolevulinate: step 4/4. Functionally, catalyzes the decarboxylation of four acetate groups of uroporphyrinogen-III to yield coproporphyrinogen-III. The protein is Uroporphyrinogen decarboxylase of Rhodococcus opacus (strain B4).